Reading from the N-terminus, the 182-residue chain is Caltractin ICL1b (182 aa).

A disordered region spans residues M1–V31. EF-hand domains lie at E38–E73, A74–E109, D111–T146, and M147–A182. Residues D51, D53, T55, S57, E62, D87, D89, S91, Q93, and E98 each coordinate Ca(2+).

Belongs to the centrin family.

The protein resides in the cytoplasm. It localises to the cytoskeleton. Its function is as follows. Plays a fundamental role in microtubule organizing center structure and function. Component of the infraciliary lattice (ICL) and the ciliary basal bodies. The sequence is that of Caltractin ICL1b (Icl1b) from Paramecium tetraurelia.